Reading from the N-terminus, the 463-residue chain is Probable mannan endo-1,4-beta-mannosidase F (463 aa).

The N-terminal stretch at 1 to 18 (MRSLSSIALLSVVGAASA) is a signal peptide. Residues 19–54 (QAGPWAQCGGKSFSGSSECASGWKCQELNEWFSQCV) enclose the CBM1 domain. Positions 57-78 (AESTTPTVSSTPTPTDAPSVSI) are disordered. Low complexity predominate over residues 59–77 (STTPTVSSTPTPTDAPSVS). A ser-rich linker region spans residues 75-118 (SVSITASVTTGINKSISVSSASKSTPLPSSSSASPSPRPTGSGS). The N-linked (GlcNAc...) asparagine glycan is linked to asparagine 87. Residues 93 to 118 (SSASKSTPLPSSSSASPSPRPTGSGS) show a composition bias toward low complexity. A disordered region spans residues 93-121 (SSASKSTPLPSSSSASPSPRPTGSGSFAK). Positions 119-463 (FAKADGLQFS…MDHMENVNKN (345 aa)) are catalytic. Residues tryptophan 171 and asparagine 285 each contribute to the substrate site. Glutamate 286 acts as the Proton donor/acceptor in catalysis. Tyrosine 361 serves as a coordination point for substrate. Glutamate 395 acts as the Nucleophile in catalysis. Tryptophan 424 is a substrate binding site.

The protein belongs to the glycosyl hydrolase 5 (cellulase A) family.

The protein resides in the secreted. It catalyses the reaction Random hydrolysis of (1-&gt;4)-beta-D-mannosidic linkages in mannans, galactomannans and glucomannans.. Endo-1,4-mannanase, a crucial enzyme for depolymerization of seed galactomannans and wood galactoglucomannans. The protein is Probable mannan endo-1,4-beta-mannosidase F (manF) of Aspergillus oryzae (strain ATCC 42149 / RIB 40) (Yellow koji mold).